The chain runs to 185 residues: HTH-type transcriptional regulator SA2364 (185 aa).

In terms of domain architecture, HTH tetR-type spans 6–66 (KENRQRIEEI…YVIQRDLDIF (61 aa)). Positions 29 to 48 (SMNRIAKELGIGMGTLYRHF) form a DNA-binding region, H-T-H motif.

The chain is HTH-type transcriptional regulator SA2364 from Staphylococcus aureus (strain N315).